Consider the following 387-residue polypeptide: MTPTELNLKAKALLETHFEDIVLSGEISKITLHGSGHWYFDLKDERSSIACAMFKGANLKVGFKPAVGDFLELCGSVSLYPESGRYQFIATSMKKAGFGDLEAQFLALKERLQKEGLFDPLFKKSLPKFPKKVGIITSKTSAALQDMLKLIHQKEYFLAKIYIFDALTQGNNAPFSLIQALKKADDMDLDVLIIARGGGSREDLFCFNDENLAREIFKAKTPIISAIGHEIDYVISDFVADFRAPTPSAAIDTLFYSKLDIEQSLDLMEEKLMQLWNHKIQNYENLLLNLSKFFKFNSLPKIIDEKIKQSHNIEKQLNHLLANQMRYNELKLDKLQNAYLQHENFFNKSKKFICIRKNGKIANLEDLKSDDIVILSSQTSQKEAKIL.

This sequence belongs to the XseA family. In terms of assembly, heterooligomer composed of large and small subunits.

It is found in the cytoplasm. The enzyme catalyses Exonucleolytic cleavage in either 5'- to 3'- or 3'- to 5'-direction to yield nucleoside 5'-phosphates.. In terms of biological role, bidirectionally degrades single-stranded DNA into large acid-insoluble oligonucleotides, which are then degraded further into small acid-soluble oligonucleotides. The chain is Exodeoxyribonuclease 7 large subunit from Campylobacter jejuni subsp. jejuni serotype O:6 (strain 81116 / NCTC 11828).